A 37-amino-acid chain; its full sequence is Cytochrome b6-f complex subunit 5 (37 aa).

The helical transmembrane segment at 5–25 threads the bilayer; sequence LLSGIVLGLVPVTIAGLFVTA.

The protein belongs to the PetG family. As to quaternary structure, the 4 large subunits of the cytochrome b6-f complex are cytochrome b6, subunit IV (17 kDa polypeptide, PetD), cytochrome f and the Rieske protein, while the 4 small subunits are PetG, PetL, PetM and PetN. The complex functions as a dimer.

The protein localises to the plastid. It localises to the chloroplast thylakoid membrane. Component of the cytochrome b6-f complex, which mediates electron transfer between photosystem II (PSII) and photosystem I (PSI), cyclic electron flow around PSI, and state transitions. PetG is required for either the stability or assembly of the cytochrome b6-f complex. This is Cytochrome b6-f complex subunit 5 from Chlorella vulgaris (Green alga).